The primary structure comprises 201 residues: Large ribosomal subunit protein uL4 (201 aa).

Positions 45–75 (AQKSRSEVSGSGKKPWRQKGTGRARSGSLRS) are disordered.

It belongs to the universal ribosomal protein uL4 family. Part of the 50S ribosomal subunit.

Its function is as follows. One of the primary rRNA binding proteins, this protein initially binds near the 5'-end of the 23S rRNA. It is important during the early stages of 50S assembly. It makes multiple contacts with different domains of the 23S rRNA in the assembled 50S subunit and ribosome. Functionally, forms part of the polypeptide exit tunnel. This is Large ribosomal subunit protein uL4 from Buchnera aphidicola subsp. Cinara cedri (strain Cc).